Reading from the N-terminus, the 455-residue chain is DNA repair protein RadA (455 aa).

A C4-type zinc finger spans residues 11–28; the sequence is CVGCGYVHPKWLGRCPEC. An ATP-binding site is contributed by 97–104; the sequence is GEPGIGKS. The RadA KNRFG motif motif lies at 250–254; the sequence is KNRFG. Positions 350 to 455 are lon-protease-like; it reads DIYVNVAGGI…IAEIFSKAKA (106 aa).

It belongs to the RecA family. RadA subfamily.

Its function is as follows. DNA-dependent ATPase involved in processing of recombination intermediates, plays a role in repairing DNA breaks. Stimulates the branch migration of RecA-mediated strand transfer reactions, allowing the 3' invading strand to extend heteroduplex DNA faster. Binds ssDNA in the presence of ADP but not other nucleotides, has ATPase activity that is stimulated by ssDNA and various branched DNA structures, but inhibited by SSB. Does not have RecA's homology-searching function. The sequence is that of DNA repair protein RadA from Treponema pallidum (strain Nichols).